The chain runs to 310 residues: ADP-L-glycero-D-manno-heptose-6-epimerase (310 aa).

NADP(+) contacts are provided by residues 10–11 (FI), 31–32 (DN), K38, K53, 75–79 (EGACS), and N92. Catalysis depends on Y140, which acts as the Proton acceptor. Residue K144 coordinates NADP(+). N169 is a binding site for substrate. NADP(+) contacts are provided by V170 and K178. The active-site Proton acceptor is the K178. Residues S180, H187, 201–204 (FEGS), R209, and Y272 each bind substrate.

This sequence belongs to the NAD(P)-dependent epimerase/dehydratase family. HldD subfamily. Homopentamer. Requires NADP(+) as cofactor.

It carries out the reaction ADP-D-glycero-beta-D-manno-heptose = ADP-L-glycero-beta-D-manno-heptose. Its pathway is nucleotide-sugar biosynthesis; ADP-L-glycero-beta-D-manno-heptose biosynthesis; ADP-L-glycero-beta-D-manno-heptose from D-glycero-beta-D-manno-heptose 7-phosphate: step 4/4. It functions in the pathway bacterial outer membrane biogenesis; LPS core biosynthesis. Functionally, catalyzes the interconversion between ADP-D-glycero-beta-D-manno-heptose and ADP-L-glycero-beta-D-manno-heptose via an epimerization at carbon 6 of the heptose. This chain is ADP-L-glycero-D-manno-heptose-6-epimerase, found in Klebsiella pneumoniae.